Here is a 99-residue protein sequence, read N- to C-terminus: Regulatory protein FanB (99 aa).

In terms of biological role, trans-acting protein involved in the regulation of the biogenesis of K99 fimbriae (FanC). The chain is Regulatory protein FanB (fanB) from Escherichia coli.